A 149-amino-acid chain; its full sequence is Nucleoside diphosphate kinase (149 aa).

6 residues coordinate ATP: Lys9, Phe57, Arg85, Thr91, Arg102, and Asn112. His115 (pros-phosphohistidine intermediate) is an active-site residue.

It belongs to the NDK family. Homotetramer. Mg(2+) is required as a cofactor.

The protein resides in the cytoplasm. It catalyses the reaction a 2'-deoxyribonucleoside 5'-diphosphate + ATP = a 2'-deoxyribonucleoside 5'-triphosphate + ADP. It carries out the reaction a ribonucleoside 5'-diphosphate + ATP = a ribonucleoside 5'-triphosphate + ADP. Major role in the synthesis of nucleoside triphosphates other than ATP. The ATP gamma phosphate is transferred to the NDP beta phosphate via a ping-pong mechanism, using a phosphorylated active-site intermediate. This chain is Nucleoside diphosphate kinase, found in Synechocystis sp. (strain ATCC 27184 / PCC 6803 / Kazusa).